We begin with the raw amino-acid sequence, 408 residues long: uncharacterized protein (408 aa).

4Fe-4S ferredoxin-type domains are found at residues 42-72 (IPPIVKFPEKCISCEGCKESCPAFAIEMIYN), 78-107 (KLPVIDEGSCVACANCIEVCPTGVLEMDKH), 122-151 (SNLIIDEEVCVRCGNCERACPINVIERKEG), 151-181 (GKYVINMALCISCKECIKVCPIENAIVVVDE), 212-241 (KIPHIVSGLCVSCGICKDVCVGEIDLNEKK), 233-265 (GEIDLNEKKVVECVKCGLCIEVCSTTAIRIYKP), 273-302 (ICYVIDEDLCIGCRICQKVCGSGAIKISKE), and 304-333 (KLPYIVPELCVRGGACARECPVGAIKVVKP). [4Fe-4S] cluster contacts are provided by C52, C55, C58, C62, C87, C90, C93, C97, C131, C134, C137, C141, C160, C163, C166, and C170. [4Fe-4S] cluster-binding residues include C282, C285, C288, and C292.

This is an uncharacterized protein from Methanocaldococcus jannaschii (strain ATCC 43067 / DSM 2661 / JAL-1 / JCM 10045 / NBRC 100440) (Methanococcus jannaschii).